Reading from the N-terminus, the 128-residue chain is Large ribosomal subunit protein bL12 (128 aa).

This sequence belongs to the bacterial ribosomal protein bL12 family. In terms of assembly, homodimer. Part of the ribosomal stalk of the 50S ribosomal subunit. Forms a multimeric L10(L12)X complex, where L10 forms an elongated spine to which 2 to 4 L12 dimers bind in a sequential fashion. Binds GTP-bound translation factors.

In terms of biological role, forms part of the ribosomal stalk which helps the ribosome interact with GTP-bound translation factors. Is thus essential for accurate translation. This chain is Large ribosomal subunit protein bL12, found in Brachyspira hyodysenteriae (strain ATCC 49526 / WA1).